The chain runs to 469 residues: Dihydroorotate dehydrogenase (quinone), mitochondrial (469 aa).

Residues 1–37 (MSSSAAALAWRRSLRDALLRGSAWRGAPAANSAAARL) constitute a mitochondrion transit peptide. The chain crosses the membrane as a helical span at residues 62–82 (LLTGAMIGLAIAGGAYVSTAD). Residues 150 to 154 (AGFDK) and Ser174 contribute to the FMN site. Lys154 contacts substrate. Position 199–203 (199–203 (NRCGF)) interacts with substrate. Residues 219 to 247 (HGKRKMEETSSSTSPTTSDVKQGGKAGPG) are disordered. Positions 227-236 (TSSSTSPTTS) are enriched in low complexity. FMN is bound by residues Asn252 and Asn283. 283 to 288 (NVSSPN) contacts substrate. Catalysis depends on Ser286, which acts as the Nucleophile. 2 residues coordinate FMN: Lys328 and Ser356. 357–358 (NT) contacts substrate. Residues Gly380, Gly409, and 430–431 (YT) contribute to the FMN site.

This sequence belongs to the dihydroorotate dehydrogenase family. Type 2 subfamily. FMN serves as cofactor.

It is found in the mitochondrion inner membrane. It carries out the reaction (S)-dihydroorotate + a quinone = orotate + a quinol. Its pathway is pyrimidine metabolism; UMP biosynthesis via de novo pathway; orotate from (S)-dihydroorotate (quinone route): step 1/1. Functionally, catalyzes the conversion of dihydroorotate to orotate with quinone as electron acceptor. In Oryza sativa subsp. japonica (Rice), this protein is Dihydroorotate dehydrogenase (quinone), mitochondrial (PYRD).